Consider the following 701-residue polypeptide: Elongation factor G (701 aa).

Residues Lys-8–Ile-290 enclose the tr-type G domain. GTP is bound by residues Ala-17–Thr-24, Asp-88–His-92, and Asn-142–Asp-145.

It belongs to the TRAFAC class translation factor GTPase superfamily. Classic translation factor GTPase family. EF-G/EF-2 subfamily.

It localises to the cytoplasm. Functionally, catalyzes the GTP-dependent ribosomal translocation step during translation elongation. During this step, the ribosome changes from the pre-translocational (PRE) to the post-translocational (POST) state as the newly formed A-site-bound peptidyl-tRNA and P-site-bound deacylated tRNA move to the P and E sites, respectively. Catalyzes the coordinated movement of the two tRNA molecules, the mRNA and conformational changes in the ribosome. This Hamiltonella defensa subsp. Acyrthosiphon pisum (strain 5AT) protein is Elongation factor G.